The sequence spans 360 residues: Alkanal monooxygenase alpha chain (360 aa).

This sequence belongs to the bacterial luciferase oxidoreductase family. In terms of assembly, heterodimer of an alpha and a beta chain.

The catalysed reaction is a long-chain fatty aldehyde + FMNH2 + O2 = a long-chain fatty acid + hnu + FMN + H2O + 2 H(+). Light-emitting reaction in luminous bacteria. In Photorhabdus luminescens (Xenorhabdus luminescens), this protein is Alkanal monooxygenase alpha chain (luxA).